The primary structure comprises 207 residues: MANVKLFDQTGKEAGEVVLNDAVFGIEPNESVVFDVIISQRASLRQGTHAVKNRSAVSGGGRKPWRQKGTGRARQGSIRSPQWRGGGIVFGPTPRSYAYKLPRKVRRLALKSVYSEKVAENKFVAVDSLSFTAPKTAEFAKVLAALSIDTKVLVILEEGNEFAALSARNLPNVKVATATTASVLDIVNSDKLLVTQAAISKIEEVLA.

Residues 49-78 (HAVKNRSAVSGGGRKPWRQKGTGRARQGSI) form a disordered region.

Belongs to the universal ribosomal protein uL4 family. As to quaternary structure, part of the 50S ribosomal subunit.

In terms of biological role, one of the primary rRNA binding proteins, this protein initially binds near the 5'-end of the 23S rRNA. It is important during the early stages of 50S assembly. It makes multiple contacts with different domains of the 23S rRNA in the assembled 50S subunit and ribosome. Functionally, forms part of the polypeptide exit tunnel. In Streptococcus sanguinis (strain SK36), this protein is Large ribosomal subunit protein uL4.